We begin with the raw amino-acid sequence, 187 residues long: UPF0340 protein SPJ_0612 (187 aa).

Belongs to the UPF0340 family.

This chain is UPF0340 protein SPJ_0612, found in Streptococcus pneumoniae (strain JJA).